Here is a 651-residue protein sequence, read N- to C-terminus: L-type lectin-domain containing receptor kinase IX.1 (651 aa).

Positions 1 to 19 (MANSILLFSFVLVLPFVCS) are cleaved as a signal peptide. The interval 20–251 (VQFNISRFGS…GNRLLSWEFS (232 aa)) is legume-lectin like. The Extracellular portion of the chain corresponds to 20 to 269 (VQFNISRFGS…KKSQNDKKGM (250 aa)). 8 N-linked (GlcNAc...) asparagine glycosylation sites follow: Asn-23, Asn-125, Asn-129, Asn-162, Asn-169, Asn-174, Asn-195, and Asn-211. The helical transmembrane segment at 270 to 290 (IIGISVSGFVLLTFFITSLIV) threads the bilayer. Residues 291 to 651 (FLKRKQQKKK…VTFSSAQHGR (361 aa)) lie on the Cytoplasmic side of the membrane. The Protein kinase domain occupies 335 to 616 (FADDRKLGEG…LNLEAPVPHL (282 aa)). ATP-binding positions include 341–349 (LGEGGFGAV) and Lys-364. Residue Asp-459 is the Proton acceptor of the active site. A disordered region spans residues 630–651 (SNTTSVSSGGATVTFSSAQHGR).

This sequence in the C-terminal section; belongs to the protein kinase superfamily. Ser/Thr protein kinase family. The protein in the N-terminal section; belongs to the leguminous lectin family. Interacts with ABCG40.

It localises to the cell membrane. It catalyses the reaction L-seryl-[protein] + ATP = O-phospho-L-seryl-[protein] + ADP + H(+). It carries out the reaction L-threonyl-[protein] + ATP = O-phospho-L-threonyl-[protein] + ADP + H(+). Its function is as follows. Promotes hydrogen peroxide H(2)O(2) production and cell death. In terms of biological role, involved in resistance response to the pathogenic oomycetes Phytophthora infestans and Phytophthora capsici. The sequence is that of L-type lectin-domain containing receptor kinase IX.1 from Arabidopsis thaliana (Mouse-ear cress).